The following is a 439-amino-acid chain: DNA damage-inducible protein 1 (439 aa).

Positions 1-82 constitute a Ubiquitin-like domain; the sequence is MQITIAIQDT…LALHVRETQR (82 aa). A disordered region spans residues 82–101; it reads RATAVPESQQGRPAAPPQQD. The active site involves aspartate 220. The disordered stretch occupies residues 333-398; it reads QDEPTIEGPG…PAPRAPQARS (66 aa). Low complexity-rich tracts occupy residues 364-375 and 383-398; these read GQAGPSTAAQPG and PASASAPAPRAPQARS. In terms of domain architecture, UBA spans 398–438; that stretch reads SFPREHIEQLVALGADEQKAIRALEATDGNVEYAASLIFEG.

Belongs to the DDI1 family. As to quaternary structure, binds ubiquitin and polyubiquitinated proteins.

The protein localises to the cytoplasm. Its function is as follows. Probable aspartic protease. May be involved in the regulation of exocytosis. Acts as a linker between the 19S proteasome and polyubiquitinated proteins via UBA domain interactions with ubiquitin for their subsequent degradation. Required for S-phase checkpoint control. The protein is DNA damage-inducible protein 1 (ddi-1) of Neurospora crassa (strain ATCC 24698 / 74-OR23-1A / CBS 708.71 / DSM 1257 / FGSC 987).